The sequence spans 95 residues: Protein TusB (95 aa).

Belongs to the DsrH/TusB family. In terms of assembly, heterohexamer, formed by a dimer of trimers. The hexameric TusBCD complex contains 2 copies each of TusB, TusC and TusD. The TusBCD complex interacts with TusE.

The protein resides in the cytoplasm. In terms of biological role, part of a sulfur-relay system required for 2-thiolation of 5-methylaminomethyl-2-thiouridine (mnm(5)s(2)U) at tRNA wobble positions. The chain is Protein TusB from Klebsiella pneumoniae subsp. pneumoniae (strain ATCC 700721 / MGH 78578).